We begin with the raw amino-acid sequence, 313 residues long: Ribose-phosphate pyrophosphokinase (313 aa).

Residues 37 to 39 (DGE) and 96 to 97 (RQ) each bind ATP. His131 and Asp170 together coordinate Mg(2+). The active site involves Lys193. Residues Arg195, Asp219, and 223-227 (DTAGT) contribute to the D-ribose 5-phosphate site.

Belongs to the ribose-phosphate pyrophosphokinase family. Class I subfamily. As to quaternary structure, homohexamer. Requires Mg(2+) as cofactor.

It localises to the cytoplasm. The catalysed reaction is D-ribose 5-phosphate + ATP = 5-phospho-alpha-D-ribose 1-diphosphate + AMP + H(+). It participates in metabolic intermediate biosynthesis; 5-phospho-alpha-D-ribose 1-diphosphate biosynthesis; 5-phospho-alpha-D-ribose 1-diphosphate from D-ribose 5-phosphate (route I): step 1/1. Functionally, involved in the biosynthesis of the central metabolite phospho-alpha-D-ribosyl-1-pyrophosphate (PRPP) via the transfer of pyrophosphoryl group from ATP to 1-hydroxyl of ribose-5-phosphate (Rib-5-P). The chain is Ribose-phosphate pyrophosphokinase from Pseudomonas putida (strain ATCC 47054 / DSM 6125 / CFBP 8728 / NCIMB 11950 / KT2440).